A 72-amino-acid polypeptide reads, in one-letter code: Large ribosomal subunit protein uL29 (72 aa).

This sequence belongs to the universal ribosomal protein uL29 family.

In Prochlorococcus marinus (strain MIT 9515), this protein is Large ribosomal subunit protein uL29.